A 248-amino-acid polypeptide reads, in one-letter code: Probable transcriptional regulatory protein RPA1097 (248 aa).

The tract at residues 1–21 (MAGHSQFKNIMHRKGRQDAQR) is disordered.

This sequence belongs to the TACO1 family.

It localises to the cytoplasm. The chain is Probable transcriptional regulatory protein RPA1097 from Rhodopseudomonas palustris (strain ATCC BAA-98 / CGA009).